A 111-amino-acid polypeptide reads, in one-letter code: MKGRQGERVRLYVRGTVLGYKRSKSNQYPNTSLIQIEGVNTQEEVNWYKGKRLAYIYKAKTKKNGSHYRCIWGKVTRPHGNSGVVRSKFTSNLPPKSMGARVRVFMYPSNI.

The protein belongs to the eukaryotic ribosomal protein eL33 family.

The polypeptide is Large ribosomal subunit protein eL33z (RPL35AB) (Arabidopsis thaliana (Mouse-ear cress)).